The sequence spans 207 residues: Thiamine-phosphate synthase (207 aa).

4-amino-2-methyl-5-(diphosphooxymethyl)pyrimidine contacts are provided by residues Gln37–Lys41 and Asn69. Residues Asp70 and Asp89 each contribute to the Mg(2+) site. Ser108 is a 4-amino-2-methyl-5-(diphosphooxymethyl)pyrimidine binding site. Residue Thr134 to Ser136 coordinates 2-[(2R,5Z)-2-carboxy-4-methylthiazol-5(2H)-ylidene]ethyl phosphate. Position 137 (Lys137) interacts with 4-amino-2-methyl-5-(diphosphooxymethyl)pyrimidine. Residues Gly165 and Ile185–Ser186 contribute to the 2-[(2R,5Z)-2-carboxy-4-methylthiazol-5(2H)-ylidene]ethyl phosphate site.

It belongs to the thiamine-phosphate synthase family. It depends on Mg(2+) as a cofactor.

The enzyme catalyses 2-[(2R,5Z)-2-carboxy-4-methylthiazol-5(2H)-ylidene]ethyl phosphate + 4-amino-2-methyl-5-(diphosphooxymethyl)pyrimidine + 2 H(+) = thiamine phosphate + CO2 + diphosphate. It carries out the reaction 2-(2-carboxy-4-methylthiazol-5-yl)ethyl phosphate + 4-amino-2-methyl-5-(diphosphooxymethyl)pyrimidine + 2 H(+) = thiamine phosphate + CO2 + diphosphate. The catalysed reaction is 4-methyl-5-(2-phosphooxyethyl)-thiazole + 4-amino-2-methyl-5-(diphosphooxymethyl)pyrimidine + H(+) = thiamine phosphate + diphosphate. The protein operates within cofactor biosynthesis; thiamine diphosphate biosynthesis; thiamine phosphate from 4-amino-2-methyl-5-diphosphomethylpyrimidine and 4-methyl-5-(2-phosphoethyl)-thiazole: step 1/1. Functionally, condenses 4-methyl-5-(beta-hydroxyethyl)thiazole monophosphate (THZ-P) and 2-methyl-4-amino-5-hydroxymethyl pyrimidine pyrophosphate (HMP-PP) to form thiamine monophosphate (TMP). The protein is Thiamine-phosphate synthase of Desulfitobacterium hafniense (strain Y51).